The sequence spans 402 residues: Zinc finger protein 322 (402 aa).

The segment at 43–65 (YQCLECKQNFCENLALIMCERTH) adopts a C2H2-type 1; atypical zinc-finger fold. 8 C2H2-type zinc fingers span residues 71 to 93 (YKCD…QRIH), 99 to 121 (YKCS…QRTH), 127 to 149 (YTCD…QRSH), 155 to 177 (YLCS…RRTH), 183 to 205 (FKCL…QRTH), 211 to 233 (YKCN…KRVH), 239 to 261 (YKCG…QRVH), and 267 to 289 (YKCL…QATH). The C2H2-type 10; degenerate zinc-finger motif lies at 293–315 (FKCLEYEKSFNCSSDLIVHQRIH). The C2H2-type 11; degenerate zinc finger occupies 351-373 (YKYTVCDKSFHQSSALLQHQTVH). Phosphoserine is present on S391.

The protein belongs to the krueppel C2H2-type zinc-finger protein family. In terms of assembly, interacts with POU5F1.

The protein localises to the cytoplasm. The protein resides in the nucleus. Its function is as follows. Transcriptional activator. Important for maintenance of pluripotency in embryonic stem cells. Binds directly to the POU5F1 distal enhancer and the NANOG proximal promoter, and enhances expression of both genes. Can also bind to numerous other gene promoters and regulates expression of many other pluripotency factors, either directly or indirectly. Promotes inhibition of MAPK signaling during embryonic stem cell differentiation. In Macaca fascicularis (Crab-eating macaque), this protein is Zinc finger protein 322 (ZNF322).